The following is a 1035-amino-acid chain: Cell-division control histidine kinase PdhS (1035 aa).

Positions 1–613 are important for polar localization; it reads MSGSYPFIDI…HADGSEEPVD (613 aa). Positions 500–533 are disordered; that stretch reads QGLANTRAESETPVSETSSIEPVEPTPPVKTRSE. The interval 614–1035 is interaction with DivK; it reads THLNAIAWRG…VFPPTRVLAD (422 aa). Residues 659-730 form the PAS domain; the sequence is HVEELKTILD…YLHGLSGNGV (72 aa). A Histidine kinase domain is found at 802–1031; it reads RISHEIRTPL…VVEIVFPPTR (230 aa). His-805 is modified (phosphohistidine; by autocatalysis).

In terms of assembly, interacts with DivK.

It localises to the cytoplasm. It carries out the reaction ATP + protein L-histidine = ADP + protein N-phospho-L-histidine.. In terms of biological role, functions as a polar differentiation marker. Essential protein that, by localizing in the old pole of dividing cells, controls cell division and maturation, probably through control of DivK phosphorylation status and cellular distribution, which in turn regulates CtrA, a transcriptional regulator of the minB operon. The asymmetrical localization of this protein is probably required for cells to enter a new division cycle. The chain is Cell-division control histidine kinase PdhS (pdhS) from Brucella suis (strain ATCC 23445 / NCTC 10510).